Reading from the N-terminus, the 272-residue chain is MTLQEKIMQELNVKPSIEPKQEIEKRVGFLKSYLKKTGAKGFVLGISGGQDSTLAGRLAQLAVEELREEGIQAEFIAVRLPYGVQQDEDDAQLALKFIQPDKSFAFDIASTVGSFAAQYQSVTGEALADFHKGNVKARVRMITQYAIGGQNQLLVIGTDHAAEAVTGFFTKYGDGGADLLPLTGLTKRQGRSLLEELGAPERLYTKSPTADLLDEKPQQSDETELGLTYDNIDDYLEGKAVSSEVAEAIEKRYKASEHKRQVPASMFDDWWK.

45-52 (GISGGQDS) is a binding site for ATP. Aspartate 51 contacts Mg(2+). Arginine 138 contributes to the deamido-NAD(+) binding site. Residue threonine 158 participates in ATP binding. Glutamate 163 contacts Mg(2+). Residues lysine 171 and aspartate 178 each contribute to the deamido-NAD(+) site. Residues lysine 187 and threonine 209 each coordinate ATP. 258–259 (HK) provides a ligand contact to deamido-NAD(+).

This sequence belongs to the NAD synthetase family. In terms of assembly, homodimer.

It carries out the reaction deamido-NAD(+) + NH4(+) + ATP = AMP + diphosphate + NAD(+) + H(+). It functions in the pathway cofactor biosynthesis; NAD(+) biosynthesis; NAD(+) from deamido-NAD(+) (ammonia route): step 1/1. Catalyzes the ATP-dependent amidation of deamido-NAD to form NAD. Uses ammonia as a nitrogen source. This is NH(3)-dependent NAD(+) synthetase from Bacillus licheniformis (strain ATCC 14580 / DSM 13 / JCM 2505 / CCUG 7422 / NBRC 12200 / NCIMB 9375 / NCTC 10341 / NRRL NRS-1264 / Gibson 46).